Here is a 437-residue protein sequence, read N- to C-terminus: Homogentisate 1,2-dioxygenase (437 aa).

Catalysis depends on His295, which acts as the Proton acceptor. Positions 338 and 344 each coordinate Fe cation. Homogentisate contacts are provided by Tyr353 and His374. Residue His374 participates in Fe cation binding.

Belongs to the homogentisate dioxygenase family. Hexamer; dimer of trimers. Fe cation is required as a cofactor.

The catalysed reaction is homogentisate + O2 = 4-maleylacetoacetate + H(+). Its pathway is amino-acid degradation; L-phenylalanine degradation; acetoacetate and fumarate from L-phenylalanine: step 4/6. Involved in the catabolism of homogentisate (2,5-dihydroxyphenylacetate or 2,5-OH-PhAc), a central intermediate in the degradation of phenylalanine and tyrosine. Catalyzes the oxidative ring cleavage of the aromatic ring of homogentisate to yield maleylacetoacetate. The polypeptide is Homogentisate 1,2-dioxygenase (Myxococcus xanthus (strain DK1622)).